We begin with the raw amino-acid sequence, 143 residues long: Peptide methionine sulfoxide reductase MsrB (143 aa).

The MsrB domain maps to 16–139; it reads DAELRRRLTP…NSAALNFESR (124 aa). Residues Cys55, Cys58, Cys104, and Cys107 each coordinate Zn(2+). Cys128 serves as the catalytic Nucleophile.

It belongs to the MsrB Met sulfoxide reductase family. Zn(2+) is required as a cofactor.

The enzyme catalyses L-methionyl-[protein] + [thioredoxin]-disulfide + H2O = L-methionyl-(R)-S-oxide-[protein] + [thioredoxin]-dithiol. The protein is Peptide methionine sulfoxide reductase MsrB of Burkholderia cenocepacia (strain HI2424).